A 192-amino-acid polypeptide reads, in one-letter code: Inosine triphosphate pyrophosphatase (192 aa).

Residue 11-16 (TGNKNK) participates in ITP binding. Residue Glu41 participates in Mg(2+) binding. Residues Lys53, 69–70 (DT), Lys86, 146–149 (FGWD), Lys169, and 174–175 (HR) each bind ITP.

It belongs to the HAM1 NTPase family. As to quaternary structure, homodimer. The cofactor is Mg(2+). Mn(2+) serves as cofactor.

It is found in the cytoplasm. The enzyme catalyses ITP + H2O = IMP + diphosphate + H(+). It carries out the reaction dITP + H2O = dIMP + diphosphate + H(+). It catalyses the reaction XTP + H2O = XMP + diphosphate + H(+). Its function is as follows. Pyrophosphatase that hydrolyzes non-canonical purine nucleotides such as inosine triphosphate (ITP), deoxyinosine triphosphate (dITP) or xanthosine 5'-triphosphate (XTP) to their respective monophosphate derivatives. The enzyme does not distinguish between the deoxy- and ribose forms. Probably excludes non-canonical purines from RNA and DNA precursor pools, thus preventing their incorporation into RNA and DNA and avoiding chromosomal lesions. This is Inosine triphosphate pyrophosphatase from Ciona intestinalis (Transparent sea squirt).